We begin with the raw amino-acid sequence, 357 residues long: Probable butyrate kinase 1 (357 aa).

Belongs to the acetokinase family.

Its subcellular location is the cytoplasm. It catalyses the reaction butanoate + ATP = butanoyl phosphate + ADP. The chain is Probable butyrate kinase 1 from Thermotoga maritima (strain ATCC 43589 / DSM 3109 / JCM 10099 / NBRC 100826 / MSB8).